Consider the following 450-residue polypeptide: Phosphoglucosamine mutase (450 aa).

Ser101 functions as the Phosphoserine intermediate in the catalytic mechanism. 4 residues coordinate Mg(2+): Ser101, Asp240, Asp242, and Asp244. Ser101 carries the post-translational modification Phosphoserine.

Belongs to the phosphohexose mutase family. The cofactor is Mg(2+). Activated by phosphorylation.

It carries out the reaction alpha-D-glucosamine 1-phosphate = D-glucosamine 6-phosphate. Its function is as follows. Catalyzes the conversion of glucosamine-6-phosphate to glucosamine-1-phosphate. The protein is Phosphoglucosamine mutase of Streptococcus gordonii (strain Challis / ATCC 35105 / BCRC 15272 / CH1 / DL1 / V288).